Reading from the N-terminus, the 884-residue chain is Telomerase reverse transcriptase (884 aa).

The 304-residue stretch at 422-725 (CRNHNSYTLS…TVIQFCAMHI (304 aa)) folds into the Reverse transcriptase domain. Positions 530, 670, and 671 each coordinate Mg(2+).

Belongs to the reverse transcriptase family. Telomerase subfamily. As to quaternary structure, catalytic subunit of the telomerase holoenzyme complex composed minimally of EST2 and the telomerase RNA template component.

The protein resides in the nucleus. Its subcellular location is the chromosome. It localises to the telomere. The catalysed reaction is DNA(n) + a 2'-deoxyribonucleoside 5'-triphosphate = DNA(n+1) + diphosphate. Functionally, telomerase is a ribonucleoprotein enzyme essential for the replication of chromosome termini in most eukaryotes. It elongates telomeres. It is a reverse transcriptase that adds simple sequence repeats to chromosome ends by copying a template sequence within the RNA component of the enzyme. The protein is Telomerase reverse transcriptase (EST2) of Saccharomyces cerevisiae (strain ATCC 204508 / S288c) (Baker's yeast).